The primary structure comprises 1575 residues: MNLTTTMPAAVAPDPPAQLAVSSRSLSDSSDAAGASRTSSSCRASSPSHCPTHAWNPDPPPSSLQPVFSFSPSLPPPCPSPAISSCPPNTLSPPNLLQGIVSQLAMASYIGRLLLYLFQVVPSLLYWAITFTTITVPTALFTLFSMSLTFTMNFTTLLIIVLLLVSTVSWFIRYRFLNIYSRLPPEPQRKEPEIDLFPDSQDGDSKPGLSNYLDEFLSAIKVFGYLERPVFHELTRTMQTRKLIAGETLLLEEEKGFCLVVDGLVQIFVKSIQERDDDRDGWQLDEAVEDSVDEDDEIRRRGHQGYQLLTEVKNGASMSSLFSILSLFSEDIKLRHNEDMESSSSSFNNVPAPDSNPMSPALLLESPTRVSFPDQRDIPTQPSADTLPKVSPLALEGSPGPFEHDPKPRGHRRKRPSRPKRAKSVHPDILARAMVDTTIAIIPASAFRRLTRVYPKATAHIIQVILTRLQRVTFATAHSYLGLTTEVLSIEQQMTKYTSFDLPNHLRGAALDKLKSKFTKEKERLGPEDGTKGIALHNPALNRRRRSSSSLRKDAALHAKLTAVRGKGSASNPIRYGDHESTGVSPGDLLSTIQLSRFGPRYGSERLNGRSVFYDAASGMKTPAGGPPSPLATPGQPLFRFPAQNVTFQRQDSLDQDAIFRESILDCMMKALGLTGSTQDALRKTHNSGDASPHLVSYDSRRQKAVFNNAFGFIDPYDGFGDGDSESLMSMSVTSAGGTSPVHNLRTELQDEIEIVYFPKGSVLIEQGEHNPGLYYVIDGFLDVGIPVNEKGEDLIGSSRRPTAEDILLPITGNASRVSSTLGTAHNQRKKASRRSLYMVKPGGVEGYIGSITSYRSFTDVTAKTDVYVGFLPRAVLERIADRYPLVMLTMAKRLTTVLPRLILHIDFALEWVQVNAGQVIHHQGDESDAIYIVLNGRLRAVLDKGDGKVSVLGEYGQGDSVGELEVMTESTRPGTLHAIRDTELAKFPRTLFNSLAQEHPGITIQISKLIAQRMRHIIDNPLEKGSDKGSPDSAKPTTSTLNLRTVAVLPVTAGIPVVEFGNRLLNAFNQVGVTNGVTSLHQADILNHLGRHAFSKMGKLKLAQYLADLEERYGMVLYVGDTSVNAPWTQTCIAQADCILLVALAEGSPAIGEYERFLLGMKTTARKELVLLHAERYSQPGLTRQWLKNRMWINGGHHHIQMAFRLTAEPVHPETKRLGAVLKQRVQVIQAEIQKYTSRRIRQTPVYSTSTPVKGDFHRLARRLCGKSVGLVLGGGGARGIAHIGVIKALEEAGIPIDIIGGTSIGSFIGALYARDADVVPAYGRAKKFSGRMASMWRFALDLTYPSASYTTGHEFNRGIFKAFGNSHIEDFWLEFYCNTTNISKSRLEFHSSGYAWRYVRASMSLAGLIPPLCDEGNMLLDGGYVDNLTVARMKSLGADVIFAVDVGAIDDNTPQGYGDSLSGFWALVNRWNPFSSLPNPPTLSEIQARLAYVSSVDALERAKSTPGCLYMRPPIDAFGTLDFAKFDEIYQVGYKFGKEFLDRLKNEGGLPIQEETEEKKKLRRTMAPRRASI.

The disordered stretch occupies residues 1-56 (MNLTTTMPAAVAPDPPAQLAVSSRSLSDSSDAAGASRTSSSCRASSPSHCPTHAWN). At 1–99 (MNLTTTMPAA…TLSPPNLLQG (99 aa)) the chain is on the cytoplasmic side. Over residues 19 to 48 (LAVSSRSLSDSSDAAGASRTSSSCRASSPS) the composition is skewed to low complexity. Residues 100–120 (IVSQLAMASYIGRLLLYLFQV) traverse the membrane as a helical segment. Residues 121–151 (VPSLLYWAITFTTITVPTALFTLFSMSLTFT) lie on the Lumenal side of the membrane. Residues 152-172 (MNFTTLLIIVLLLVSTVSWFI) form a helical membrane-spanning segment. Residues 173-1575 (RYRFLNIYSR…RTMAPRRASI (1403 aa)) are Cytoplasmic-facing. Disordered stretches follow at residues 339–425 (DMES…AKSV) and 568–587 (GSAS…VSPG). Residues 409–424 (RGHRRKRPSRPKRAKS) are compositionally biased toward basic residues. A nucleoside 3',5'-cyclic phosphate contacts are provided by residues 737–856 (GGTS…TSYR) and 894–1014 (RLTT…IAQR). One can recognise a PNPLA domain in the interval 1272 to 1436 (LVLGGGGARG…VDNLTVARMK (165 aa)). A GXGXXG motif is present at residues 1276–1281 (GGGARG). The GXSXG motif lies at 1303-1307 (GTSIG). The Nucleophile role is filled by Ser1305. Residue Asp1423 is the Proton acceptor of the active site. A DGA/G motif is present at residues 1423 to 1425 (DGG).

This sequence belongs to the NTE family.

It localises to the endoplasmic reticulum membrane. The catalysed reaction is a 1-acyl-sn-glycero-3-phosphocholine + H2O = sn-glycerol 3-phosphocholine + a fatty acid + H(+). With respect to regulation, inhibited by organophosphorus esters. In terms of biological role, intracellular phospholipase B that catalyzes the double deacylation of phosphatidylcholine (PC) to glycerophosphocholine (GroPCho). Plays an important role in membrane lipid homeostasis. Responsible for the rapid PC turnover in response to inositol, elevated temperatures, or when choline is present in the growth medium. The chain is Lysophospholipase NTE1 (NTE1) from Coccidioides immitis (strain RS) (Valley fever fungus).